A 577-amino-acid chain; its full sequence is Pentatricopeptide repeat-containing protein At1g06143 (577 aa).

PPR repeat units follow at residues 59-89 (DCRL…MQEP), 90-124 (NVFV…SVSP), 125-155 (SSYT…KFGF), 158-192 (HVKI…DDIA), 193-219 (WTTM…MSEK), 220-250 (NEAT…MPVK), 251-285 (DIIS…GIIP), 286-320 (DEVT…GFVL), 321-351 (DVYI…LPKK), 352-386 (NLFC…SVKP), 387-417 (NAVT…MIDD), and 423-453 (NVEH…MEFE). The type E motif stretch occupies residues 458-534 (IWGALLDGCR…CPGTSSIRID (77 aa)). A type E(+) motif region spans residues 535 to 565 (KRDHLFAAADKSHSASDEVCLLLDEIYDQMG).

Belongs to the PPR family. PCMP-E subfamily.

The chain is Pentatricopeptide repeat-containing protein At1g06143 (EMB1444) from Arabidopsis thaliana (Mouse-ear cress).